A 368-amino-acid chain; its full sequence is Aspartate-semialdehyde dehydrogenase (368 aa).

NADP(+) contacts are provided by residues 10-13 (RGMV), 37-38 (TS), and Gln-74. Position 103 (Arg-103) interacts with phosphate. Residue Cys-136 is the Acyl-thioester intermediate of the active site. Cys-136 carries the post-translational modification S-cysteinyl cysteine; in inhibited form. Residue Gln-163 participates in substrate binding. Residues 166 to 167 (SG) and Pro-194 contribute to the NADP(+) site. Residue Glu-242 coordinates substrate. Lys-245 lines the phosphate pocket. Arg-268 serves as a coordination point for substrate. The Proton acceptor role is filled by His-275. Gln-351 contacts NADP(+).

Belongs to the aspartate-semialdehyde dehydrogenase family. As to quaternary structure, homodimer.

The enzyme catalyses L-aspartate 4-semialdehyde + phosphate + NADP(+) = 4-phospho-L-aspartate + NADPH + H(+). It participates in amino-acid biosynthesis; L-lysine biosynthesis via DAP pathway; (S)-tetrahydrodipicolinate from L-aspartate: step 2/4. Its pathway is amino-acid biosynthesis; L-methionine biosynthesis via de novo pathway; L-homoserine from L-aspartate: step 2/3. It functions in the pathway amino-acid biosynthesis; L-threonine biosynthesis; L-threonine from L-aspartate: step 2/5. Its function is as follows. Catalyzes the NADPH-dependent formation of L-aspartate-semialdehyde (L-ASA) by the reductive dephosphorylation of L-aspartyl-4-phosphate. This is Aspartate-semialdehyde dehydrogenase from Salmonella typhi.